We begin with the raw amino-acid sequence, 266 residues long: Dihydropteroate synthase (266 aa).

The Pterin-binding domain maps to 12-260 (AAIMGILNVT…DVKANQDIVA (249 aa)). Asparagine 19 is a Mg(2+) binding site. Residues threonine 59, aspartate 93, asparagine 112, aspartate 176, lysine 212, and 248–250 (RVH) contribute to the (7,8-dihydropterin-6-yl)methyl diphosphate site.

It belongs to the DHPS family. Homodimer or homotrimer. Mg(2+) serves as cofactor.

The catalysed reaction is (7,8-dihydropterin-6-yl)methyl diphosphate + 4-aminobenzoate = 7,8-dihydropteroate + diphosphate. It participates in cofactor biosynthesis; tetrahydrofolate biosynthesis; 7,8-dihydrofolate from 2-amino-4-hydroxy-6-hydroxymethyl-7,8-dihydropteridine diphosphate and 4-aminobenzoate: step 1/2. Catalyzes the condensation of para-aminobenzoate (pABA) with 6-hydroxymethyl-7,8-dihydropterin diphosphate (DHPt-PP) to form 7,8-dihydropteroate (H2Pte), the immediate precursor of folate derivatives. The polypeptide is Dihydropteroate synthase (folP) (Streptococcus pyogenes serotype M1).